Here is a 131-residue protein sequence, read N- to C-terminus: Small ribosomal subunit protein uS8 (131 aa).

Belongs to the universal ribosomal protein uS8 family. As to quaternary structure, part of the 30S ribosomal subunit. Contacts proteins S5 and S12.

One of the primary rRNA binding proteins, it binds directly to 16S rRNA central domain where it helps coordinate assembly of the platform of the 30S subunit. The polypeptide is Small ribosomal subunit protein uS8 (Polaromonas naphthalenivorans (strain CJ2)).